Consider the following 199-residue polypeptide: uncharacterized protein (199 aa).

Helical transmembrane passes span methionine 1–phenylalanine 21, isoleucine 28–tyrosine 48, leucine 51–methionine 71, leucine 83–isoleucine 103, glutamine 127–glutamine 147, and alanine 154–isoleucine 174.

It localises to the cell membrane. This is an uncharacterized protein from Bacillus subtilis (strain 168).